A 151-amino-acid polypeptide reads, in one-letter code: Large ribosomal subunit protein bL9 (151 aa).

Belongs to the bacterial ribosomal protein bL9 family.

Its function is as follows. Binds to the 23S rRNA. In Pseudothermotoga lettingae (strain ATCC BAA-301 / DSM 14385 / NBRC 107922 / TMO) (Thermotoga lettingae), this protein is Large ribosomal subunit protein bL9.